The chain runs to 208 residues: Ribonuclease HII (208 aa).

The region spanning 5–198 is the RNase H type-2 domain; sequence PLIAGVDEVG…CQPRLEHDCR (194 aa). A divalent metal cation is bound by residues Asp11, Glu12, and Asp106.

This sequence belongs to the RNase HII family. Mn(2+) is required as a cofactor. It depends on Mg(2+) as a cofactor.

The protein localises to the cytoplasm. The catalysed reaction is Endonucleolytic cleavage to 5'-phosphomonoester.. Functionally, endonuclease that specifically degrades the RNA of RNA-DNA hybrids. This is Ribonuclease HII from Microcystis aeruginosa (strain NIES-843 / IAM M-2473).